A 947-amino-acid chain; its full sequence is Cell adhesion molecule CEACAM5 (947 aa).

The signal sequence occupies residues 1–34 (MEASSVLPCKWCTHLQGLLLTASFLTCCHLPTTA). Ig-like V-type domains lie at 35–132 (QITI…EIVS), 166–259 (SEGG…VQLY), 270–378 (PLQV…LHVN), 392–498 (RLSI…LQLD), 509–615 (QVKI…LHVN), 642–733 (GESV…VQLQ), and 746–851 (DQLI…VQVH). Residues Asn57, Asn103, Asn110, Asn207, Asn224, Asn341, Asn461, Asn472, Asn578, Asn698, Asn709, Asn816, and Asn823 are each glycosylated (N-linked (GlcNAc...) asparagine). Residues 859-943 (PFVRVTDTTV…SKSSLPVRLA (85 aa)) form the Ig-like C2-type 1 domain. Cysteines 878 and 926 form a disulfide.

The protein belongs to the immunoglobulin superfamily. CEA family. In terms of assembly, homodimer.

The protein resides in the cell membrane. It localises to the apical cell membrane. The protein localises to the cell surface. Cell surface glycoprotein that plays a role in cell adhesion, intracellular signaling and tumor progression. Mediates homophilic and heterophilic cell adhesion with other carcinoembryonic antigen-related cell adhesion molecules, such as CEACAM6. Plays a role as an oncogene by promoting tumor progression; induces resistance to anoikis of colorectal carcinoma cells. This chain is Cell adhesion molecule CEACAM5, found in Mus musculus (Mouse).